A 621-amino-acid chain; its full sequence is Kelch-like protein 40 (621 aa).

The BTB domain maps to Leu-33–Glu-98. In terms of domain architecture, BACK spans Cys-133 to Glu-239. Positions Leu-265–Glu-298 are disordered. Over residues Glu-274–Glu-284 the composition is skewed to basic and acidic residues. Kelch repeat units lie at residues Gln-360–Asn-412, Ala-413–Asp-462, Leu-463–Gly-510, Ile-512–Gly-557, and Leu-559–Leu-613.

Belongs to the KLHL40 family. Component of the BCR(KLHL40) E3 ubiquitin ligase complex, at least composed of CUL3, KLHL40 and RBX1. Interacts with LMOD3. As to expression, specifically expressed in skeletal muscles in embryonic, neonatal and adults. Expressed in various types of muscles, including extensor digitorum longus, gastrocnemius, soleus, diaphragm, masseter and heart (at protein level). Not detected in brain, liver and lung (at protein level).

The protein localises to the cytoplasm. It localises to the myofibril. Its subcellular location is the sarcomere. The protein resides in the a band. It is found in the i band. Functionally, substrate-specific adapter of a BCR (BTB-CUL3-RBX1) E3 ubiquitin ligase complex that acts as a key regulator of skeletal muscle development. The BCR(KLHL40) complex acts by mediating ubiquitination and degradation of TFDP1, thereby regulating the activity of the E2F:DP transcription factor complex. Promotes stabilization of LMOD3 by acting as a negative regulator of LMOD3 ubiquitination; the molecular process by which it negatively regulates ubiquitination of LMOD3 is however unclear. This Mus musculus (Mouse) protein is Kelch-like protein 40.